A 745-amino-acid chain; its full sequence is Receptor-type adenylate cyclase (745 aa).

Over 1-341 the chain is Extracellular; that stretch reads GELGQTDRFF…NEGALTRAQL (341 aa). 4 N-linked (GlcNAc...) asparagine glycosylation sites follow: Asn-15, Asn-50, Asn-189, and Asn-312. Residues 342-362 traverse the membrane as a helical segment; that stretch reads IGVVVGTIFAVLLLLALGIVL. The Cytoplasmic segment spans residues 363 to 745; sequence CVALRNTRDN…GSDEVARTCV (383 aa). In terms of domain architecture, Guanylate cyclase spans 384 to 538; that stretch reads TLIFTDIESS…RTPNLAARTE (155 aa). Mg(2+)-binding residues include Asp-389 and Asp-432.

Belongs to the adenylyl cyclase class-3 family. It depends on Mg(2+) as a cofactor.

It localises to the cell membrane. It carries out the reaction ATP = 3',5'-cyclic AMP + diphosphate. Its function is as follows. Could act as a receptor for an unknown ligand. The sequence is that of Receptor-type adenylate cyclase from Trypanosoma congolense.